A 177-amino-acid chain; its full sequence is Large ribosomal subunit protein uL10 (177 aa).

The protein belongs to the universal ribosomal protein uL10 family. In terms of assembly, part of the ribosomal stalk of the 50S ribosomal subunit. The N-terminus interacts with L11 and the large rRNA to form the base of the stalk. The C-terminus forms an elongated spine to which L12 dimers bind in a sequential fashion forming a multimeric L10(L12)X complex.

Functionally, forms part of the ribosomal stalk, playing a central role in the interaction of the ribosome with GTP-bound translation factors. The chain is Large ribosomal subunit protein uL10 from Xanthomonas campestris pv. campestris (strain 8004).